Consider the following 261-residue polypeptide: (R)-S-adenosyl-L-methionine hydrolase (261 aa).

Asp12, Asp72, and Asn187 together coordinate adenosine. The (R)-S-adenosyl-L-methionine site is built by Asn187, Ser231, and Val239. Val239 serves as a coordination point for adenosine.

This sequence belongs to the SAM hydrolase / SAM-dependent halogenase family.

The catalysed reaction is (R)-S-adenosyl-L-methionine + H2O = adenosine + L-methionine + H(+). With respect to regulation, activity is inhibited by chloride. In terms of biological role, catalyzes the hydrolysis of S-adenosyl-L-methionine (SAM) into adenosine and L-methionine. Is likely stereoselective, specifically hydrolyzing (R)-S-adenosyl-L-methionine ((R)-SAM), the inactive form of the ubiquitous cofactor SAM, and not the active form of SAM, (S)-S-adenosyl-L-methionine. Probaly plays a role in preventing accumulation of (R)-S-adenosyl-L-methionine in cells; maintenance of (S)-S-denosyl-L-methionine homochirality is important for cellular health given that the (R)-form is largely inactive as a methyl donor and can function as an inhibitor of methyltransferases. Shows very slow iodinase activity in vitro. The chain is (R)-S-adenosyl-L-methionine hydrolase from Salinispora arenicola (strain CNS-205).